A 158-amino-acid chain; its full sequence is 2-C-methyl-D-erythritol 2,4-cyclodiphosphate synthase (158 aa).

Residues Asp-9 and His-11 each coordinate a divalent metal cation. Residues 9-11 (DAH) and 35-36 (HS) each bind 4-CDP-2-C-methyl-D-erythritol 2-phosphate. His-43 serves as a coordination point for a divalent metal cation. 4-CDP-2-C-methyl-D-erythritol 2-phosphate is bound by residues 57–59 (DIG), 62–66 (FPDTD), 133–136 (TTTE), Phe-140, and Arg-143.

Belongs to the IspF family. In terms of assembly, homotrimer. Requires a divalent metal cation as cofactor.

The catalysed reaction is 4-CDP-2-C-methyl-D-erythritol 2-phosphate = 2-C-methyl-D-erythritol 2,4-cyclic diphosphate + CMP. It functions in the pathway isoprenoid biosynthesis; isopentenyl diphosphate biosynthesis via DXP pathway; isopentenyl diphosphate from 1-deoxy-D-xylulose 5-phosphate: step 4/6. Functionally, involved in the biosynthesis of isopentenyl diphosphate (IPP) and dimethylallyl diphosphate (DMAPP), two major building blocks of isoprenoid compounds. Catalyzes the conversion of 4-diphosphocytidyl-2-C-methyl-D-erythritol 2-phosphate (CDP-ME2P) to 2-C-methyl-D-erythritol 2,4-cyclodiphosphate (ME-CPP) with a corresponding release of cytidine 5-monophosphate (CMP). In Methylococcus capsulatus (strain ATCC 33009 / NCIMB 11132 / Bath), this protein is 2-C-methyl-D-erythritol 2,4-cyclodiphosphate synthase.